The primary structure comprises 268 residues: Indole-3-glycerol phosphate synthase (268 aa).

This sequence belongs to the TrpC family.

It carries out the reaction 1-(2-carboxyphenylamino)-1-deoxy-D-ribulose 5-phosphate + H(+) = (1S,2R)-1-C-(indol-3-yl)glycerol 3-phosphate + CO2 + H2O. It functions in the pathway amino-acid biosynthesis; L-tryptophan biosynthesis; L-tryptophan from chorismate: step 4/5. The polypeptide is Indole-3-glycerol phosphate synthase (Acinetobacter baumannii (strain AB0057)).